The following is a 213-amino-acid chain: ATP phosphoribosyltransferase (213 aa).

Belongs to the ATP phosphoribosyltransferase family. Short subfamily. In terms of assembly, heteromultimer composed of HisG and HisZ subunits.

It is found in the cytoplasm. The catalysed reaction is 1-(5-phospho-beta-D-ribosyl)-ATP + diphosphate = 5-phospho-alpha-D-ribose 1-diphosphate + ATP. Its pathway is amino-acid biosynthesis; L-histidine biosynthesis; L-histidine from 5-phospho-alpha-D-ribose 1-diphosphate: step 1/9. In terms of biological role, catalyzes the condensation of ATP and 5-phosphoribose 1-diphosphate to form N'-(5'-phosphoribosyl)-ATP (PR-ATP). Has a crucial role in the pathway because the rate of histidine biosynthesis seems to be controlled primarily by regulation of HisG enzymatic activity. This is ATP phosphoribosyltransferase (hisG) from Bacillus subtilis (strain 168).